We begin with the raw amino-acid sequence, 290 residues long: Inositol monophosphatase 2 (290 aa).

Residues Glu-83, Asp-103, Ile-105, and Asp-106 each contribute to the Mg(2+) site. Glu-83 lines the substrate pocket. Substrate is bound by residues 105 to 108, 207 to 209, Gln-226, and Asp-233; these read IDGT and GSS. A Mg(2+)-binding site is contributed by Asp-233.

Belongs to the inositol monophosphatase superfamily. In terms of assembly, homodimer. It depends on Mg(2+) as a cofactor.

It is found in the cytoplasm. It catalyses the reaction a myo-inositol phosphate + H2O = myo-inositol + phosphate. It participates in polyol metabolism; myo-inositol biosynthesis; myo-inositol from D-glucose 6-phosphate: step 2/2. In terms of biological role, can use myo-inositol monophosphates, scylloinositol 1,4-diphosphate, glucose-1-phosphate, beta-glycerophosphate, and 2'-AMP as substrates. Has been implicated as the pharmacological target for lithium Li(+) action in brain. The sequence is that of Inositol monophosphatase 2 (Impa2) from Rattus norvegicus (Rat).